We begin with the raw amino-acid sequence, 652 residues long: Type III restriction-modification enzyme StyLTI Mod subunit (652 aa).

Residues 135–138 form a binding of S-adenosyl methionine region; the sequence is DPPY.

It belongs to the N(4)/N(6)-methyltransferase family. Homodimer, also forms a functional restriction-competent complex with Res.

The enzyme catalyses a 2'-deoxyadenosine in DNA + S-adenosyl-L-methionine = an N(6)-methyl-2'-deoxyadenosine in DNA + S-adenosyl-L-homocysteine + H(+). Functionally, a beta subtype methylase that binds the system-specific DNA recognition site 5'-CAGAG-3' and methylates A-4 (of only 1 strand as the other does not have an A residue). DNA restriction requires both the Res and Mod subunits. The protein is Type III restriction-modification enzyme StyLTI Mod subunit of Salmonella typhimurium (strain LT2 / SGSC1412 / ATCC 700720).